A 115-amino-acid chain; its full sequence is Large ribosomal subunit protein eL30 (115 aa).

Phosphoserine is present on residues serine 10 and serine 16. An N6-acetyllysine; alternate modification is found at lysine 26. A Glycyl lysine isopeptide (Lys-Gly) (interchain with G-Cter in SUMO2); alternate cross-link involves residue lysine 26.

It belongs to the eukaryotic ribosomal protein eL30 family. As to quaternary structure, component of the large ribosomal subunit.

It is found in the cytoplasm. Its function is as follows. Component of the large ribosomal subunit. The ribosome is a large ribonucleoprotein complex responsible for the synthesis of proteins in the cell. This chain is Large ribosomal subunit protein eL30 (RPL30), found in Homo sapiens (Human).